Here is a 350-residue protein sequence, read N- to C-terminus: MTNYFRSNVEAMASYVPGEQPPRGTQVIKLNSNENPYPPSPAALAALQDIDGEWLRRYPEPLGGEFREAASKVLGVPSDWLIVGNGSDEILSIVIRACTEPGRKVVYPMPTYVLYRTLTQMQAADILEIPYQENNVLPVAELIAADGAVTFIASPNSPSGHIVPNDDLRKLASELSGVLVIDEAYVDFAEESALDLVQEYENVILIRTLSKGYSLAGLRLGFGVGNPKLLDGLFKVKDSYNIDAIACKVAAVAITDQAYKNSCVAKVKASRTQLTKDLKQLGFHVWDSHGNFLLTKPPEGNAEYLYEKLKEQKILIRYFQQPGLEDKLRITVGTDEQNHILVRALRDLLR.

Position 211 is an N6-(pyridoxal phosphate)lysine (K211).

This sequence belongs to the class-II pyridoxal-phosphate-dependent aminotransferase family. Histidinol-phosphate aminotransferase subfamily. In terms of assembly, homodimer. The cofactor is pyridoxal 5'-phosphate.

It catalyses the reaction L-histidinol phosphate + 2-oxoglutarate = 3-(imidazol-4-yl)-2-oxopropyl phosphate + L-glutamate. It functions in the pathway amino-acid biosynthesis; L-histidine biosynthesis; L-histidine from 5-phospho-alpha-D-ribose 1-diphosphate: step 7/9. This chain is Histidinol-phosphate aminotransferase 1, found in Trichormus variabilis (strain ATCC 29413 / PCC 7937) (Anabaena variabilis).